Here is a 590-residue protein sequence, read N- to C-terminus: Rho GTPase-activating protein 36 (590 aa).

The Rho-GAP domain occupies 214–414; the sequence is MSLNPIAQQI…AMIDNWDILF (201 aa). Residues 526 to 590 form a disordered region; sequence IPNNEDTDSD…KGKFATRFFP (65 aa).

As to quaternary structure, may interacts (via the Rho-GAP domain) with the active form of RAC1.

GTPase activator for the Rho-type GTPases by converting them to an inactive GDP-bound state. The chain is Rho GTPase-activating protein 36 (Arhgap36) from Mus musculus (Mouse).